Here is a 621-residue protein sequence, read N- to C-terminus: MIPRAPPSTQLFSAKTAVNQRSQTFKAFYATIRSLRQPPPEPPESPQAADNDFILSILKANPSLRDTRSYLASFGVQPQRPKTLEDKKLPEIVIPPPPAPKLTASSTKVVKEEKHAPSPVINSILNPIYRRTALVKIQGPFTDVQLDSITRGLVYLEKLGMVSVIVVESDGVPKGEQEERKLLIDEIMRVVTSLEKQGAHARPIVGAVVRLGPKPGSEEESEPGFSPPETHIYPSDLTPIRSSLRAGEIPVLAPFALDSRCRSVRVDANDAIAGLACGMVEAASENPSPAAHEDGSSDSDAIDLTPLRLMIINQRGGVPSYARSGYPHLLINLQQEYDHILQTFDPRWKDSHPHALSDLALARTCLRYMPPTSSAIMVSHKSPSSLIGNLITNKPAVSSSLPHALLQGNLRLTPHTPTLLRRGLPIRVVRSVSDIDKEKMTALLEQSFGRVLDQEAFYGRLEKTLDFVIIAGDYDGTAIVTNEVCPGSSQPISYLDKFAVLPSHQGDGTVDFLWVALHDESYGLGHPFSANPNGGKGGKGEGRDLVWRSRSNNPVNKWYFERSTGHLRMGQWVLFWADAEKRLKVEESLRGSAGLSFIEDWEHGRLGKWADTITKIPSSWK.

A mitochondrion-targeting transit peptide spans 1 to 77 (MIPRAPPSTQ…RSYLASFGVQ (77 aa)). The disordered stretch occupies residues 213-233 (PKPGSEEESEPGFSPPETHIY). In terms of domain architecture, N-acetyltransferase spans 424–600 (LPIRVVRSVS…GSAGLSFIED (177 aa)).

It belongs to the acetyltransferase family.

It localises to the mitochondrion. It catalyses the reaction L-glutamate + acetyl-CoA = N-acetyl-L-glutamate + CoA + H(+). It functions in the pathway amino-acid biosynthesis; L-arginine biosynthesis; N(2)-acetyl-L-ornithine from L-glutamate: step 1/4. Its function is as follows. N-acetylglutamate synthase involved in arginine biosynthesis. This chain is Amino-acid acetyltransferase, mitochondrial (ARG2), found in Coprinopsis cinerea (strain Okayama-7 / 130 / ATCC MYA-4618 / FGSC 9003) (Inky cap fungus).